Consider the following 123-residue polypeptide: Holo-[acyl-carrier-protein] synthase (123 aa).

The Mg(2+) site is built by Asp9 and Glu57.

It belongs to the P-Pant transferase superfamily. AcpS family. It depends on Mg(2+) as a cofactor.

It localises to the cytoplasm. It carries out the reaction apo-[ACP] + CoA = holo-[ACP] + adenosine 3',5'-bisphosphate + H(+). Its function is as follows. Transfers the 4'-phosphopantetheine moiety from coenzyme A to a Ser of acyl-carrier-protein. The chain is Holo-[acyl-carrier-protein] synthase from Streptomyces coelicolor (strain ATCC BAA-471 / A3(2) / M145).